A 245-amino-acid chain; its full sequence is 14-3-3 protein zeta/delta (245 aa).

Residue Met-1 is modified to N-acetylmethionine. Lys-3 bears the N6-acetyllysine mark. Ser-58 is subject to Phosphoserine; by PKA. An N6-acetyllysine modification is found at Lys-68. Phosphoserine occurs at positions 184, 207, and 210. Position 232 is a phosphothreonine; by CK1 (Thr-232).

This sequence belongs to the 14-3-3 family. Homodimer. Heterodimerizes with YWHAE. Homo- and heterodimerization is inhibited by phosphorylation on Ser-58. Interacts with FOXO4, NOXA1, SSH1 ARHGEF2, CDK16 and BSPRY. Interacts with WEE1 (C-terminal). Interacts with MLF1 (phosphorylated form); the interaction retains it in the cytoplasm. Interacts with BAX; the interaction occurs in the cytoplasm. Under stress conditions, MAPK8-mediated phosphorylation releases BAX to mitochondria. Interacts with TP53; the interaction enhances p53 transcriptional activity. The Ser-58 phosphorylated form inhibits this interaction and p53 transcriptional activity. Interacts with ABL1 (phosphorylated form); the interaction retains ABL1 in the cytoplasm. Interacts with PKA-phosphorylated AANAT; the interaction modulates AANAT enzymatic activity by increasing affinity for arylalkylamines and acetyl-CoA and protecting the enzyme from dephosphorylation and proteasomal degradation. It may also prevent thiol-dependent inactivation. Interacts with AKT1; the interaction phosphorylates YWHAZ and modulates dimerization. Interacts with GAB2. Interacts with BCL2L11, SAMSN1 and TLK2. Interacts with phosphorylated RAF1; the interaction is inhibited when YWHAZ is phosphorylated on Thr-232. Interacts with Thr-phosphorylated ITGB2. Interacts with the 'Thr-369' phosphorylated form of DAPK2. Interacts with PI4KB, TBC1D22A and TBC1D22B. Interacts with ZFP36L1 (via phosphorylated form); this interaction occurs in a p38 MAPK- and AKT-signaling pathways. Interacts with SLITRK1. Interacts with AK5, LDB1, MADD, MARK3, PDE1A and SMARCB1. Interacts with YWHAZ. Interacts with MEFV. Interacts with ADAM22 (via C-terminus). Post-translationally, the delta, brain-specific form differs from the zeta form in being phosphorylated. Phosphorylation on Ser-184 by MAPK8; promotes dissociation of BAX and translocation of BAX to mitochondria. Phosphorylation on Thr-232; inhibits binding of RAF1. Phosphorylated on Ser-58 by PKA and protein kinase C delta type catalytic subunit in a sphingosine-dependent fashion. Phosphorylation on Ser-58 by PKA; disrupts homodimerization and heterodimerization with YHAE and TP53.

It is found in the cytoplasm. Its subcellular location is the melanosome. Adapter protein implicated in the regulation of a large spectrum of both general and specialized signaling pathways. Binds to a large number of partners, usually by recognition of a phosphoserine or phosphothreonine motif. Binding generally results in the modulation of the activity of the binding partner. Promotes cytosolic retention and inactivation of TFEB transcription factor by binding to phosphorylated TFEB. Induces ARHGEF7 activity on RAC1 as well as lamellipodia and membrane ruffle formation. In neurons, regulates spine maturation through the modulation of ARHGEF7 activity. This Bos taurus (Bovine) protein is 14-3-3 protein zeta/delta (YWHAZ).